The following is a 117-amino-acid chain: Large ribosomal subunit protein uL18 (117 aa).

This sequence belongs to the universal ribosomal protein uL18 family. Part of the 50S ribosomal subunit; part of the 5S rRNA/L5/L18/L25 subcomplex. Contacts the 5S and 23S rRNAs.

Functionally, this is one of the proteins that bind and probably mediate the attachment of the 5S RNA into the large ribosomal subunit, where it forms part of the central protuberance. In Actinobacillus succinogenes (strain ATCC 55618 / DSM 22257 / CCUG 43843 / 130Z), this protein is Large ribosomal subunit protein uL18.